A 447-amino-acid chain; its full sequence is tRNA-2-methylthio-N(6)-dimethylallyladenosine synthase (447 aa).

Residues 8–126 (KKVVTLAYGC…FQRLLEEAEE (119 aa)) enclose the MTTase N-terminal domain. Residues cysteine 17, cysteine 53, cysteine 87, cysteine 162, cysteine 166, and cysteine 169 each coordinate [4Fe-4S] cluster. The region spanning 148–378 (AKGKLKAYVN…ITVQNAQSLA (231 aa)) is the Radical SAM core domain. Residues 381–444 (QEMIGKTCEV…SWTLFGECRA (64 aa)) form the TRAM domain.

The protein belongs to the methylthiotransferase family. MiaB subfamily. Monomer. Requires [4Fe-4S] cluster as cofactor.

Its subcellular location is the cytoplasm. It catalyses the reaction N(6)-dimethylallyladenosine(37) in tRNA + (sulfur carrier)-SH + AH2 + 2 S-adenosyl-L-methionine = 2-methylsulfanyl-N(6)-dimethylallyladenosine(37) in tRNA + (sulfur carrier)-H + 5'-deoxyadenosine + L-methionine + A + S-adenosyl-L-homocysteine + 2 H(+). In terms of biological role, catalyzes the methylthiolation of N6-(dimethylallyl)adenosine (i(6)A), leading to the formation of 2-methylthio-N6-(dimethylallyl)adenosine (ms(2)i(6)A) at position 37 in tRNAs that read codons beginning with uridine. In Desulfitobacterium hafniense (strain Y51), this protein is tRNA-2-methylthio-N(6)-dimethylallyladenosine synthase.